The chain runs to 706 residues: Maternal embryonic leucine zipper kinase (706 aa).

In terms of domain architecture, Protein kinase spans 11–265 (YAVHDELGSG…VKKLLEHDWL (255 aa)). Residues 17 to 25 (LGSGGFGKV) and Lys40 contribute to the ATP site. Catalysis depends on Asp132, which acts as the Proton acceptor. 3 disordered regions span residues 366–386 (LDKS…SSSD), 433–493 (FTGR…SRGP), and 506–555 (SVYT…IGSA). Composition is skewed to polar residues over residues 447–461 (SVRS…SAAT) and 506–515 (SVYTTPNTRP). Positions 656–705 (QETVHGWMTVELEIVRLQMFDKVGIRRKRLKGDAFMYKKVCEKILQMAKI) constitute a KA1 domain.

This sequence belongs to the protein kinase superfamily. CAMK Ser/Thr protein kinase family. SNF1 subfamily. Post-translationally, may be phosphorylated at Thr-169 by par-4 and/or autophosphorylated which likely results in its activation. Phosphorylation is not required for co-localization with the centrosome.

It localises to the cytoplasm. Its subcellular location is the cytoskeleton. The protein localises to the microtubule organizing center. The protein resides in the centrosome. The enzyme catalyses L-seryl-[protein] + ATP = O-phospho-L-seryl-[protein] + ADP + H(+). The catalysed reaction is L-threonyl-[protein] + ATP = O-phospho-L-threonyl-[protein] + ADP + H(+). Serine/threonine-protein kinase involved in cell autonomous neuroblast asymmetric divisions that generate one precursor cell and one apoptotic cell by controlling spindle positioning, myosin distribution and the segregation of cell fate determinants. Plays a role in neural fate specification in several dopaminergic linages, acting in concert with ham-1. Involved in phosphorylation of multiple proteins associated with key developmental processes, including the cell cycle, apoptosis, endocytosis, and asymmetric cell division. Promotes cell shedding during embryogenesis, probably through the endocytosis-mediated removal of cell adhesion molecules such as hmp-1 from the cell surface. May act downstream of par-4/strd-1/mop-25 to regulate cell shedding. This is Maternal embryonic leucine zipper kinase from Caenorhabditis elegans.